Consider the following 160-residue polypeptide: pH-gated potassium channel KcsA (160 aa).

At 1 to 27 the chain is on the cytoplasmic side; that stretch reads MPPMLSGLLARLVKLLLGRHGSALHWR. A helical membrane pass occupies residues 28 to 50; that stretch reads AAGAATVLLVIVLLAGSYLAVLA. Residues 51–61 lie on the Extracellular side of the membrane; the sequence is ERGAPGAQLIT. The segment at residues 62 to 72 is an intramembrane region (helical; Pore-forming); that stretch reads YPRALWWSVET. Positions 73 to 80 form an intramembrane region, pore-forming; it reads ATTVGYGD. Positions 75–80 match the Selectivity filter motif; sequence TVGYGD. The Extracellular segment spans residues 81-87; it reads LYPVTLW. Residues 88–111 traverse the membrane as a helical segment; the sequence is GRLVAVVVMVAGITSFGLVTAALA. The Cytoplasmic portion of the chain corresponds to 112–160; sequence TWFVGREQERRGHFVRHSEKAAEEAYTRTTRALHERFDRLERMLDDNRR.

This sequence belongs to the potassium channel family. In terms of assembly, homotetramer.

It is found in the cell membrane. In terms of biological role, acts as a pH-gated potassium ion channel; changing the cytosolic pH from 7 to 4 opens the channel. The polypeptide is pH-gated potassium channel KcsA (kcsA) (Streptomyces coelicolor (strain ATCC BAA-471 / A3(2) / M145)).